Reading from the N-terminus, the 77-residue chain is Large ribosomal subunit protein bL28 (77 aa).

Belongs to the bacterial ribosomal protein bL28 family.

This is Large ribosomal subunit protein bL28 from Variovorax paradoxus (strain S110).